The chain runs to 410 residues: Demethyl-4-deoxygadusol synthase (410 aa).

NAD(+) is bound by residues 56-58, 87-90, 119-123, 143-144, lysine 156, lysine 165, and 183-186; these read DAN, EPDK, GLITD, TT, and LLRT. Residues glutamate 198, histidine 271, and histidine 287 each contribute to the Zn(2+) site.

Belongs to the sugar phosphate cyclases superfamily. DDGS family. In terms of assembly, homodimer. It depends on NAD(+) as a cofactor. Co(2+) is required as a cofactor. Requires Zn(2+) as cofactor.

The catalysed reaction is D-sedoheptulose 7-phosphate = (R)-demethyl-4-deoxygadusol + phosphate + H2O + H(+). Its function is as follows. Catalyzes the conversion of sedoheptulose 7-phosphate to demethyl-4-deoxygadusol (DDG). Involved in the synthesis of the mycosporine-like amino acid shinorine, a natural sunscreen compound that protects the cell against UV radiation. This is Demethyl-4-deoxygadusol synthase from Trichormus variabilis (strain ATCC 29413 / PCC 7937) (Anabaena variabilis).